The chain runs to 342 residues: N-acetyl-gamma-glutamyl-phosphate reductase (342 aa).

The active site involves Cys149.

Belongs to the NAGSA dehydrogenase family. Type 1 subfamily.

Its subcellular location is the cytoplasm. The catalysed reaction is N-acetyl-L-glutamate 5-semialdehyde + phosphate + NADP(+) = N-acetyl-L-glutamyl 5-phosphate + NADPH + H(+). It participates in amino-acid biosynthesis; L-arginine biosynthesis; N(2)-acetyl-L-ornithine from L-glutamate: step 3/4. Its function is as follows. Catalyzes the NADPH-dependent reduction of N-acetyl-5-glutamyl phosphate to yield N-acetyl-L-glutamate 5-semialdehyde. This Nitrosomonas eutropha (strain DSM 101675 / C91 / Nm57) protein is N-acetyl-gamma-glutamyl-phosphate reductase.